The primary structure comprises 437 residues: Dihydrofolate synthase/folylpolyglutamate synthase (437 aa).

28–30 (DLG) contributes to the 7,8-dihydropteroate binding site. 58–61 (GKGT) is an ATP binding site. Ser82 contributes to the Mg(2+) binding site. 120-123 (TYFE) provides a ligand contact to 7,8-dihydropteroate. Residue Glu144 participates in Mg(2+) binding. 151 to 153 (LDA) serves as a coordination point for 7,8-dihydropteroate. Position 171 (His171) interacts with Mg(2+). ATP is bound by residues Asn255, Arg287, and Asp316.

The protein belongs to the folylpolyglutamate synthase family. As to quaternary structure, monomer. It depends on Mg(2+) as a cofactor.

It carries out the reaction 7,8-dihydropteroate + L-glutamate + ATP = 7,8-dihydrofolate + ADP + phosphate + H(+). The catalysed reaction is (6S)-5,6,7,8-tetrahydrofolyl-(gamma-L-Glu)(n) + L-glutamate + ATP = (6S)-5,6,7,8-tetrahydrofolyl-(gamma-L-Glu)(n+1) + ADP + phosphate + H(+). It catalyses the reaction 10-formyltetrahydrofolyl-(gamma-L-Glu)(n) + L-glutamate + ATP = 10-formyltetrahydrofolyl-(gamma-L-Glu)(n+1) + ADP + phosphate + H(+). The enzyme catalyses (6R)-5,10-methylenetetrahydrofolyl-(gamma-L-Glu)(n) + L-glutamate + ATP = (6R)-5,10-methylenetetrahydrofolyl-(gamma-L-Glu)(n+1) + ADP + phosphate + H(+). Its pathway is cofactor biosynthesis; tetrahydrofolate biosynthesis; 7,8-dihydrofolate from 2-amino-4-hydroxy-6-hydroxymethyl-7,8-dihydropteridine diphosphate and 4-aminobenzoate: step 2/2. It participates in cofactor biosynthesis; tetrahydrofolylpolyglutamate biosynthesis. Functions in two distinct reactions of the de novo folate biosynthetic pathway. Catalyzes the addition of a glutamate residue to dihydropteroate (7,8-dihydropteroate or H2Pte) to form dihydrofolate (7,8-dihydrofolate monoglutamate or H2Pte-Glu). Also catalyzes successive additions of L-glutamate to tetrahydrofolate or 10-formyltetrahydrofolate or 5,10-methylenetetrahydrofolate, leading to folylpolyglutamate derivatives. The sequence is that of Dihydrofolate synthase/folylpolyglutamate synthase (folC) from Haemophilus influenzae (strain ATCC 51907 / DSM 11121 / KW20 / Rd).